The primary structure comprises 472 residues: 3-isopropylmalate dehydratase large subunit (472 aa).

[4Fe-4S] cluster-binding residues include cysteine 347, cysteine 409, and cysteine 412.

This sequence belongs to the aconitase/IPM isomerase family. LeuC type 1 subfamily. As to quaternary structure, heterodimer of LeuC and LeuD. The cofactor is [4Fe-4S] cluster.

The enzyme catalyses (2R,3S)-3-isopropylmalate = (2S)-2-isopropylmalate. Its pathway is amino-acid biosynthesis; L-leucine biosynthesis; L-leucine from 3-methyl-2-oxobutanoate: step 2/4. Catalyzes the isomerization between 2-isopropylmalate and 3-isopropylmalate, via the formation of 2-isopropylmaleate. In Salinibacter ruber (strain DSM 13855 / M31), this protein is 3-isopropylmalate dehydratase large subunit.